The chain runs to 211 residues: Thiamine-phosphate synthase (211 aa).

4-amino-2-methyl-5-(diphosphooxymethyl)pyrimidine contacts are provided by residues 37-41 (QLRIK) and N69. The Mg(2+) site is built by D70 and D89. S108 is a binding site for 4-amino-2-methyl-5-(diphosphooxymethyl)pyrimidine. 134–136 (TQT) is a 2-[(2R,5Z)-2-carboxy-4-methylthiazol-5(2H)-ylidene]ethyl phosphate binding site. K137 lines the 4-amino-2-methyl-5-(diphosphooxymethyl)pyrimidine pocket. Residues G166 and 186 to 187 (IS) each bind 2-[(2R,5Z)-2-carboxy-4-methylthiazol-5(2H)-ylidene]ethyl phosphate.

Belongs to the thiamine-phosphate synthase family. It depends on Mg(2+) as a cofactor.

The enzyme catalyses 2-[(2R,5Z)-2-carboxy-4-methylthiazol-5(2H)-ylidene]ethyl phosphate + 4-amino-2-methyl-5-(diphosphooxymethyl)pyrimidine + 2 H(+) = thiamine phosphate + CO2 + diphosphate. The catalysed reaction is 2-(2-carboxy-4-methylthiazol-5-yl)ethyl phosphate + 4-amino-2-methyl-5-(diphosphooxymethyl)pyrimidine + 2 H(+) = thiamine phosphate + CO2 + diphosphate. It carries out the reaction 4-methyl-5-(2-phosphooxyethyl)-thiazole + 4-amino-2-methyl-5-(diphosphooxymethyl)pyrimidine + H(+) = thiamine phosphate + diphosphate. It participates in cofactor biosynthesis; thiamine diphosphate biosynthesis; thiamine phosphate from 4-amino-2-methyl-5-diphosphomethylpyrimidine and 4-methyl-5-(2-phosphoethyl)-thiazole: step 1/1. Condenses 4-methyl-5-(beta-hydroxyethyl)thiazole monophosphate (THZ-P) and 2-methyl-4-amino-5-hydroxymethyl pyrimidine pyrophosphate (HMP-PP) to form thiamine monophosphate (TMP). The chain is Thiamine-phosphate synthase from Shigella boydii serotype 4 (strain Sb227).